We begin with the raw amino-acid sequence, 474 residues long: Selection and upkeep of intraepithelial T-cells protein 4 (474 aa).

An N-terminal signal peptide occupies residues 1–25; sequence MGATEVLTSYCVVLCLLQMVALSSG. Residues 26-241 lie on the Extracellular side of the membrane; that stretch reads HFTVIGSQRP…VLSGELFSWK (216 aa). Residues 27 to 140 enclose the Ig-like V-type domain; that stretch reads FTVIGSQRPI…EEHITEVKVT (114 aa). 2 disulfide bridges follow: C48–C122 and C162–C216. N-linked (GlcNAc...) asparagine glycans are attached at residues N111 and N199. The Ig-like C1-type domain occupies 141–234; that stretch reads ATSSDIQILM…QEQSINIVLS (94 aa). The helical transmembrane segment at 242–262 threads the bilayer; sequence IVWIMILSTISFVMIDFCMTY. Residues 263–298 are Cytoplasmic-facing; it reads CVQQQLIHEESLSTVDNDQCESDQSEGTCYKRNYPW. The chain crosses the membrane as a helical span at residues 299-319; sequence IIIAVVPIISVFAIIGVMLFL. The Extracellular segment spans residues 320 to 341; it reads HLEQRVTILEQHFELDTLWLED. A helical transmembrane segment spans residues 342-362; the sequence is ISVILCVVIVSNINLIPLIYF. Residues 363 to 381 are Cytoplasmic-facing; it reads RLHEHVPRFKDRSPILNKA. Residues 382–402 traverse the membrane as a helical segment; sequence VVFLHFIYFSIVCGTILLVHL. Residues 403–420 lie on the Extracellular side of the membrane; that stretch reads QLRNKVSISDSLFSLYNS. Residues 421-441 traverse the membrane as a helical segment; that stretch reads WLTDISMILGFLLSIFIVTTI. Over 442-474 the chain is Cytoplasmic; that stretch reads AKSSLFNKKWCIGLCIHMKEAEATGGPCEGEEL.

It belongs to the SKINT family. Expressed in skin, thymus and, to a lower extent, bladder and testis.

The protein localises to the membrane. May act by engaging a cell surface molecule on immature T-cells in the embryonic thymus. The polypeptide is Selection and upkeep of intraepithelial T-cells protein 4 (Skint4) (Mus musculus (Mouse)).